The following is a 450-amino-acid chain: CBL-interacting protein kinase 23 (450 aa).

The 256-residue stretch at 13 to 268 (YELGRTLGEG…IAELINNEWF (256 aa)) folds into the Protein kinase domain. Residues 19-27 (LGEGTFAKV) and lysine 42 each bind ATP. The active-site Proton acceptor is the aspartate 136. The tract at residues 154 to 183 (DFGLSALSQQVREDGLLHTTCGTPNYVAPE) is activation loop. One can recognise an NAF domain in the interval 306–331 (EERPSVMNAFELISTSQGLNLGTLFE). The tract at residues 339–368 (KRETRFASRLPANEILSKIEAAAGPMGFNV) is PPI.

This sequence belongs to the protein kinase superfamily. CAMK Ser/Thr protein kinase family. SNF1 subfamily. Mn(2+) is required as a cofactor.

The catalysed reaction is L-seryl-[protein] + ATP = O-phospho-L-seryl-[protein] + ADP + H(+). It carries out the reaction L-threonyl-[protein] + ATP = O-phospho-L-threonyl-[protein] + ADP + H(+). Functionally, CIPK serine-threonine protein kinases interact with CBL proteins. Binding of a CBL protein to the regulatory NAF domain of CIPK protein lead to the activation of the kinase in a calcium-dependent manner. The protein is CBL-interacting protein kinase 23 (CIPK23) of Oryza sativa subsp. japonica (Rice).